We begin with the raw amino-acid sequence, 415 residues long: uncharacterized protein (415 aa).

Residues Cys85, Cys91, Cys94, and Cys175 each contribute to the [4Fe-4S] cluster site. The S-adenosyl-L-methionine site is built by Gln248, Tyr276, Glu297, and Asn344. Catalysis depends on Cys371, which acts as the Nucleophile.

The protein belongs to the class I-like SAM-binding methyltransferase superfamily. RNA M5U methyltransferase family.

This is an uncharacterized protein from Leptospira interrogans serogroup Icterohaemorrhagiae serovar copenhageni (strain Fiocruz L1-130).